Here is a 92-residue protein sequence, read N- to C-terminus: Small ribosomal subunit protein uS19 (92 aa).

This sequence belongs to the universal ribosomal protein uS19 family.

Protein S19 forms a complex with S13 that binds strongly to the 16S ribosomal RNA. The protein is Small ribosomal subunit protein uS19 of Bradyrhizobium sp. (strain BTAi1 / ATCC BAA-1182).